Reading from the N-terminus, the 283-residue chain is Diphthine methyl ester synthase (283 aa).

S-adenosyl-L-methionine is bound by residues Leu9, Asp84, Gly87, 112 to 113 (SI), Leu163, Met221, and His246.

Belongs to the diphthine synthase family.

Its subcellular location is the cytoplasm. The catalysed reaction is 2-[(3S)-amino-3-carboxypropyl]-L-histidyl-[translation elongation factor 2] + 4 S-adenosyl-L-methionine = diphthine methyl ester-[translation elongation factor 2] + 4 S-adenosyl-L-homocysteine + 3 H(+). It functions in the pathway protein modification; peptidyl-diphthamide biosynthesis. Functionally, S-adenosyl-L-methionine-dependent methyltransferase that catalyzes four methylations of the modified target histidine residue in translation elongation factor 2 (EF-2), to form an intermediate called diphthine methyl ester. The four successive methylation reactions represent the second step of diphthamide biosynthesis. The protein is Diphthine methyl ester synthase (dph5) of Schizosaccharomyces pombe (strain 972 / ATCC 24843) (Fission yeast).